Here is a 221-residue protein sequence, read N- to C-terminus: Translation initiation factor 6 (221 aa).

Belongs to the eIF-6 family.

In terms of biological role, binds to the 50S ribosomal subunit and prevents its association with the 30S ribosomal subunit to form the 70S initiation complex. In Methanosphaerula palustris (strain ATCC BAA-1556 / DSM 19958 / E1-9c), this protein is Translation initiation factor 6.